The sequence spans 130 residues: Small ribosomal subunit protein uS9 (130 aa).

The disordered stretch occupies residues arginine 109–arginine 130. The segment covering lysine 111–arginine 130 has biased composition (basic residues).

This sequence belongs to the universal ribosomal protein uS9 family.

This Caldanaerobacter subterraneus subsp. tengcongensis (strain DSM 15242 / JCM 11007 / NBRC 100824 / MB4) (Thermoanaerobacter tengcongensis) protein is Small ribosomal subunit protein uS9.